The primary structure comprises 1193 residues: Protogenin (1193 aa).

Positions 1-23 (MAPPVRPGMLPLLLLLLLPPLGS) are cleaved as a signal peptide. Ig-like domains lie at 24–124 (VPGV…AHLT), 126–217 (STIS…ASLT), 230–317 (PTII…ATLT), and 322–406 (PSFV…ARLT). Residues 24–944 (VPGVWSFSEL…YYHLDQKSMT (921 aa)) are Extracellular-facing. 2 disulfides stabilise this stretch: cysteine 54–cysteine 107 and cysteine 150–cysteine 200. Residue asparagine 84 is glycosylated (N-linked (GlcNAc...) asparagine). Asparagine 238 is a glycosylation site (N-linked (GlcNAc...) asparagine). Intrachain disulfides connect cysteine 251–cysteine 299 and cysteine 343–cysteine 390. 5 consecutive Fibronectin type-III domains span residues 416–510 (APYN…TLED), 512–608 (PLRP…TPKA), 613–712 (APKS…VRDR), 719–812 (PPHH…TLPE), and 817–912 (PPVG…VLPK). N-linked (GlcNAc...) asparagine glycosylation occurs at asparagine 625. A helical transmembrane segment spans residues 945–965 (GIAVGVGIALTCILICVLILI). Residues 966–1193 (YRSKARKSSA…LRHAAESVPV (228 aa)) are Cytoplasmic-facing. Disordered stretches follow at residues 974 to 1018 (SASK…PMMP) and 1078 to 1193 (VLIS…SVPV). 2 stretches are compositionally biased toward polar residues: residues 978-990 (TTQS…SRAS) and 1086-1095 (PSSPGQTTSF). The segment covering 1105–1133 (DTEHSANSEGSHETGDSGRFSHESNDEIH) has biased composition (basic and acidic residues). A compositionally biased stretch (polar residues) spans 1136–1150 (SVISSTPPTSNSLTC).

This sequence belongs to the immunoglobulin superfamily. DCC family.

The protein localises to the membrane. Its function is as follows. May play a role in anteroposterior axis elongation. The protein is Protogenin of Rattus norvegicus (Rat).